A 600-amino-acid chain; its full sequence is Prostaglandin G/H synthase 1 (600 aa).

A signal peptide spans 1-24; it reads MSRQGISLRFPLLLLLLSPSPVLP. Residues 32-70 form the EGF-like domain; it reads PVNPCCYYPCQHQGICVRFGLDRYQCDCTRTGYYGPNCT. Cystine bridges form between C36-C47, C37-C159, C41-C57, and C59-C69. N68, N104, and N144 each carry an N-linked (GlcNAc...) asparagine glycan. Catalysis depends on H207, which acts as the Proton acceptor. Y385 serves as the catalytic For cyclooxygenase activity. H388 contributes to the heme b binding site. N410 is a glycosylation site (N-linked (GlcNAc...) asparagine). A disulfide bond links C569 and C575.

This sequence belongs to the prostaglandin G/H synthase family. In terms of assembly, homodimer. Requires heme b as cofactor.

It is found in the microsome membrane. It localises to the endoplasmic reticulum membrane. It catalyses the reaction (5Z,8Z,11Z,14Z)-eicosatetraenoate + AH2 + 2 O2 = prostaglandin H2 + A + H2O. The catalysed reaction is (5Z,8Z,11Z,14Z)-eicosatetraenoate + 2 O2 = prostaglandin G2. It carries out the reaction prostaglandin G2 + AH2 = prostaglandin H2 + A + H2O. The enzyme catalyses (9Z,12Z)-octadecadienoate + AH2 + O2 = (9R)-hydroxy-(10E,12Z)-octadecadienoate + A + H2O. It catalyses the reaction (9Z,12Z)-octadecadienoate + AH2 + O2 = (9S)-hydroxy-(10E,12Z)-octadecadienoate + A + H2O. The catalysed reaction is (9Z,12Z)-octadecadienoate + AH2 + O2 = (13S)-hydroxy-(9Z,11E)-octadecadienoate + A + H2O. It carries out the reaction (9Z,12Z)-octadecadienoate + AH2 + O2 = (13R)-hydroxy-(9Z,11E)-octadecadienoate + A + H2O. The protein operates within lipid metabolism; prostaglandin biosynthesis. Its activity is regulated as follows. The cyclooxygenase activity is inhibited by nonsteroidal anti-inflammatory drugs (NSAIDs) including ibuprofen, flurbiprofen, ketoprofen, naproxen, flurbiprofen, anirolac, fenclofenac and diclofenac. Its function is as follows. Dual cyclooxygenase and peroxidase that plays an important role in the biosynthesis pathway of prostanoids, a class of C20 oxylipins mainly derived from arachidonate ((5Z,8Z,11Z,14Z)-eicosatetraenoate, AA, C20:4(n-6)), with a particular role in the inflammatory response. The cyclooxygenase activity oxygenates AA to the hydroperoxy endoperoxide prostaglandin G2 (PGG2), and the peroxidase activity reduces PGG2 to the hydroxy endoperoxide prostaglandin H2 (PGH2), the precursor of all 2-series prostaglandins and thromboxanes. This complex transformation is initiated by abstraction of hydrogen at carbon 13 (with S-stereochemistry), followed by insertion of molecular O2 to form the endoperoxide bridge between carbon 9 and 11 that defines prostaglandins. The insertion of a second molecule of O2 (bis-oxygenase activity) yields a hydroperoxy group in PGG2 that is then reduced to PGH2 by two electrons. Involved in the constitutive production of prostanoids in particular in the stomach and platelets. In gastric epithelial cells, it is a key step in the generation of prostaglandins, such as prostaglandin E2 (PGE2), which plays an important role in cytoprotection. In platelets, it is involved in the generation of thromboxane A2 (TXA2), which promotes platelet activation and aggregation, vasoconstriction and proliferation of vascular smooth muscle cells. Can also use linoleate (LA, (9Z,12Z)-octadecadienoate, C18:2(n-6)) as substrate and produce hydroxyoctadecadienoates (HODEs) in a regio- and stereospecific manner, being (9R)-HODE ((9R)-hydroxy-(10E,12Z)-octadecadienoate) and (13S)-HODE ((13S)-hydroxy-(9Z,11E)-octadecadienoate) its major products. This is Prostaglandin G/H synthase 1 (PTGS1) from Bos taurus (Bovine).